Reading from the N-terminus, the 271-residue chain is Probable septum site-determining protein MinC (271 aa).

The disordered stretch occupies residues 106-125 (RRAPSPKAADDAPAQPEEPR). The segment covering 110–119 (SPKAADDAPA) has biased composition (low complexity).

Belongs to the MinC family. As to quaternary structure, interacts with MinD and FtsZ.

Its function is as follows. Cell division inhibitor that blocks the formation of polar Z ring septums. Rapidly oscillates between the poles of the cell to destabilize FtsZ filaments that have formed before they mature into polar Z rings. Prevents FtsZ polymerization. The protein is Probable septum site-determining protein MinC of Burkholderia thailandensis (strain ATCC 700388 / DSM 13276 / CCUG 48851 / CIP 106301 / E264).